A 403-amino-acid polypeptide reads, in one-letter code: MNTIFSARIMKRLALTTALCTAFISAAHADDLNIKTMIPGVPQIDAESYILIDYNSGKVLAEQNADVRRDPASLTKMMTSYVIGQAMKAGKFKETDLVTIGNDAWATGNPVFKGSSLMFLKPGMQVPVSQLIRGINLQSGNDACVAMADFAAGSQDAFVGLMNSYVNALGLKNTHFQTVHGLDADGQYSSARDMALIGQALIRDVPNEYSIYKEKEFTFNGIRQLNRNGLLWDNSLNVDGIKTGHTDKAGYNLVASATEGQMRLISAVMGGRTFKGREAESKKLLTWGFRFFETVNPLKVGKEFASEPVWFGDSDRASLGVDKDVYLTIPRGRMKDLKASYVLNSSELHAPLQKNQVVGTINFQLDGKTIEQRPLVVLQEIPEGNFFGKIIDYIKLMFHHWFG.

Positions 1-29 (MNTIFSARIMKRLALTTALCTAFISAAHA) are cleaved as a signal peptide. The active-site Acyl-ester intermediate is S73. The Proton acceptor role is filled by K76. S139 is an active-site residue. K242 contributes to the substrate binding site.

Belongs to the peptidase S11 family.

The protein resides in the cell inner membrane. The catalysed reaction is Preferential cleavage: (Ac)2-L-Lys-D-Ala-|-D-Ala. Also transpeptidation of peptidyl-alanyl moieties that are N-acyl substituents of D-alanine.. It functions in the pathway cell wall biogenesis; peptidoglycan biosynthesis. In terms of biological role, removes C-terminal D-alanyl residues from sugar-peptide cell wall precursors. This is D-alanyl-D-alanine carboxypeptidase DacA (dacA) from Escherichia coli O157:H7.